Here is a 137-residue protein sequence, read N- to C-terminus: TM2 domain-containing protein DDB_G0287015 (137 aa).

The region spanning 9 to 57 (QASLVVAYLLLIFLGFFGVHRFYVGRTISGVVYLLTGGIFGIGYIVDFF) is the TM2 domain. Helical transmembrane passes span 12 to 32 (LVVA…RFYV) and 39 to 59 (VVYL…FFLL). The interval 106–137 (IQPQQQQYYQQPYQQQQYQPQPYQPNSPQYQP) is disordered.

The protein belongs to the TM2 family.

The protein localises to the membrane. In Dictyostelium discoideum (Social amoeba), this protein is TM2 domain-containing protein DDB_G0287015.